Consider the following 473-residue polypeptide: Protein nucleotidyltransferase YdiU (473 aa).

8 residues coordinate ATP: G79, G81, R82, K102, D114, G115, R165, and R172. Residue D241 is the Proton acceptor of the active site. Mg(2+) contacts are provided by N242 and D251. D251 lines the ATP pocket.

Belongs to the SELO family. Requires Mg(2+) as cofactor. Mn(2+) serves as cofactor.

The catalysed reaction is L-seryl-[protein] + ATP = 3-O-(5'-adenylyl)-L-seryl-[protein] + diphosphate. It catalyses the reaction L-threonyl-[protein] + ATP = 3-O-(5'-adenylyl)-L-threonyl-[protein] + diphosphate. The enzyme catalyses L-tyrosyl-[protein] + ATP = O-(5'-adenylyl)-L-tyrosyl-[protein] + diphosphate. It carries out the reaction L-histidyl-[protein] + UTP = N(tele)-(5'-uridylyl)-L-histidyl-[protein] + diphosphate. The catalysed reaction is L-seryl-[protein] + UTP = O-(5'-uridylyl)-L-seryl-[protein] + diphosphate. It catalyses the reaction L-tyrosyl-[protein] + UTP = O-(5'-uridylyl)-L-tyrosyl-[protein] + diphosphate. In terms of biological role, nucleotidyltransferase involved in the post-translational modification of proteins. It can catalyze the addition of adenosine monophosphate (AMP) or uridine monophosphate (UMP) to a protein, resulting in modifications known as AMPylation and UMPylation. This chain is Protein nucleotidyltransferase YdiU, found in Marinomonas sp. (strain MWYL1).